The sequence spans 273 residues: MARREVDDSYTNGSVVEVVSIEEGSKMDKEDDHQNPQAPDGGDVVVCGMPMSFTFLQMLLAEFLATFFLMFAGLGAITVEEKKGAVTFPGVAVAWGAAVMAMVYAVGHVSGAHLNPAVTLGFAVAGRFPWRRAPAYALAQTAAATAASVVLRLMFGGRHAPVPATLPGGAHAQSLVIEFVITFYLMFVIMAVATDDQAVGHMAGVAVGGTIMLNVLFAGPVSGASMNPARSIGPALVGSKYTALWVYILGPFAGAAAGAWAYSLIRLTGDRTD.

2 helical membrane-spanning segments follow: residues 59–79 (LLAE…AITV) and 86–106 (VTFP…VYAV). The short motif at 115 to 117 (NPA) is the NPA 1 element. The next 3 membrane-spanning stretches (helical) occupy residues 133–155 (APAY…RLMF), 174–194 (SLVI…AVAT), and 198–218 (AVGH…VLFA). The short motif at 227–229 (NPA) is the NPA 2 element. A helical transmembrane segment spans residues 245-265 (WVYILGPFAGAAAGAWAYSLI).

The protein belongs to the MIP/aquaporin (TC 1.A.8) family. NIP (TC 1.A.8.12) subfamily. As to expression, expressed in leaves.

It is found in the membrane. Aquaporins facilitate the transport of water and small neutral solutes across cell membranes. The protein is Aquaporin NIP1-4 (NIP1-4) of Oryza sativa subsp. japonica (Rice).